We begin with the raw amino-acid sequence, 69 residues long: uncharacterized protein (69 aa).

2 disordered regions span residues 1–32 and 44–69; these read MSAPYKNLDRDTKHTHPKLNETERNLNRGWGD and QSDADKQLAEDKMETKYEKSKPAPSD. 2 stretches are compositionally biased toward basic and acidic residues: residues 7-32 and 46-69; these read NLDRDTKHTHPKLNETERNLNRGWGD and DADKQLAEDKMETKYEKSKPAPSD.

This is an uncharacterized protein from Schizosaccharomyces pombe (strain 972 / ATCC 24843) (Fission yeast).